An 86-amino-acid chain; its full sequence is Small ribosomal subunit protein bS20 (86 aa).

The interval 1-27 (MANSKSAKKRAIQAEKRRQHNASRRSM) is disordered.

Belongs to the bacterial ribosomal protein bS20 family.

Functionally, binds directly to 16S ribosomal RNA. This Vibrio atlanticus (strain LGP32) (Vibrio splendidus (strain Mel32)) protein is Small ribosomal subunit protein bS20.